We begin with the raw amino-acid sequence, 330 residues long: D-lactate dehydrogenase (330 aa).

Residues 156–157 (RI), Asp-176, 206–207 (VP), 233–235 (AAR), and Asp-259 contribute to the NAD(+) site. Residue Arg-235 is part of the active site. Glu-264 is an active-site residue. His-296 (proton donor) is an active-site residue.

The protein belongs to the D-isomer specific 2-hydroxyacid dehydrogenase family.

It catalyses the reaction (R)-lactate + NAD(+) = pyruvate + NADH + H(+). The polypeptide is D-lactate dehydrogenase (ldhD) (Staphylococcus epidermidis (strain ATCC 35984 / DSM 28319 / BCRC 17069 / CCUG 31568 / BM 3577 / RP62A)).